The sequence spans 156 residues: Small ribosomal subunit protein uS7 (156 aa).

This sequence belongs to the universal ribosomal protein uS7 family. In terms of assembly, part of the 30S ribosomal subunit. Contacts proteins S9 and S11.

Functionally, one of the primary rRNA binding proteins, it binds directly to 16S rRNA where it nucleates assembly of the head domain of the 30S subunit. Is located at the subunit interface close to the decoding center, probably blocks exit of the E-site tRNA. The polypeptide is Small ribosomal subunit protein uS7 (Synechocystis sp. (strain ATCC 27184 / PCC 6803 / Kazusa)).